A 179-amino-acid polypeptide reads, in one-letter code: Natural killer cells antigen CD94 (179 aa).

Residues 1–10 lie on the Cytoplasmic side of the membrane; that stretch reads MAVSQTTLWN. A helical; Signal-anchor for type II membrane protein membrane pass occupies residues 11-31; sequence LISGILGVICLLLMTTMGILL. Residues 32-179 lie on the Extracellular side of the membrane; the sequence is KNLLLTESIQ…SRFICKQELM (148 aa). Intrachain disulfides connect Cys58–Cys70, Cys61–Cys72, Cys89–Cys174, and Cys152–Cys166. The C-type lectin domain maps to 68-175; that stretch reads HQCNCYLFFD…CEDKSRFICK (108 aa). 2 N-linked (GlcNAc...) asparagine glycosylation sites follow: Asn93 and Asn125.

As to quaternary structure, can form disulfide-bonded heterodimer with NKG2 family members KLRC1 and KLRC2. KLRD1-KLRC1 heterodimer interacts with peptide-bound MHC-E-B2M heterotrimeric complex. KLRD1 plays a prominent role in directly interacting with MHC-E. KLRD1-KLRC1 interacts with much higher affinity with peptide-bound MHC-E-B2M than KLRD1-KLRC2. Interacts with the adapter protein TYROBP/DAP12; this interaction is required for cell surface expression and cell activation.

The protein localises to the cell membrane. Immune receptor involved in self-nonself discrimination. In complex with KLRC1 or KLRC2 on cytotoxic and regulatory lymphocyte subsets, recognizes non-classical major histocompatibility (MHC) class Ib molecule MHC-E loaded with self-peptides derived from the signal sequence of classical MHC class Ia and non-classical MHC class Ib molecules. Enables cytotoxic cells to monitor the expression of MHC class I molecules in healthy cells and to tolerate self. Primarily functions as a ligand binding subunit as it lacks the capacity to signal. Its function is as follows. KLRD1-KLRC1 acts as an immune inhibitory receptor. Key inhibitory receptor on natural killer (NK) cells that regulates their activation and effector functions. Dominantly counteracts T cell receptor signaling on a subset of memory/effector CD8-positive T cells as part of an antigen-driven response to avoid autoimmunity. On intraepithelial CD8-positive gamma-delta regulatory T cells triggers TGFB1 secretion, which in turn limits the cytotoxic programming of intraepithelial CD8-positive alpha-beta T cells, distinguishing harmless from pathogenic antigens. In MHC-E-rich tumor microenvironment, acts as an immune inhibitory checkpoint and may contribute to progressive loss of effector functions of NK cells and tumor-specific T cells, a state known as cell exhaustion. Upon MHC-E-peptide binding, transmits intracellular signals through KLRC1 immunoreceptor tyrosine-based inhibition motifs (ITIMs) by recruiting INPP5D/SHIP-1 and INPPL1/SHIP-2 tyrosine phosphatases to ITIMs, and ultimately opposing signals transmitted by activating receptors through dephosphorylation of proximal signaling molecules. In terms of biological role, KLRD1-KLRC2 acts as an immune activating receptor. On cytotoxic lymphocyte subsets recognizes MHC-E loaded with signal sequence-derived peptides from non-classical MHC class Ib MHC-G molecules, likely playing a role in the generation and effector functions of adaptive NK cells and in maternal-fetal tolerance during pregnancy. Regulates the effector functions of terminally differentiated cytotoxic lymphocyte subsets, and in particular may play a role in adaptive NK cell response to viral infection. Upon MHC-E-peptide binding, transmits intracellular signals via the adapter protein TYROBP/DAP12, triggering the phosphorylation of proximal signaling molecules and cell activation. This Canis lupus familiaris (Dog) protein is Natural killer cells antigen CD94 (KLRD1).